The sequence spans 172 residues: C-phycocyanin beta subunit (172 aa).

The residue at position 72 (N72) is an N4-methylasparagine. Residues C82 and C153 each contribute to the (2R,3E)-phycocyanobilin site.

The protein belongs to the phycobiliprotein family. The alpha and beta subunits exhibit high affinity for one another and form heterodimers. These heterodimers form heterohexamers of 3 alpha and 3 beta subunits which, in turn, aggregate into a heterododecamer consisting of 2 heterohexamers. In terms of processing, contains two covalently linked bilin chromophores.

The protein localises to the cellular thylakoid membrane. Light-harvesting photosynthetic bile pigment-protein from the phycobiliprotein complex (phycobilisome, PBS). Phycocyanin is the major phycobiliprotein in the PBS rod. This chain is C-phycocyanin beta subunit (cpcB), found in Arthrospira platensis (Spirulina platensis).